The chain runs to 149 residues: Arginine repressor (149 aa).

It belongs to the ArgR family.

The protein resides in the cytoplasm. Its pathway is amino-acid biosynthesis; L-arginine biosynthesis [regulation]. In terms of biological role, regulates arginine biosynthesis genes. The chain is Arginine repressor from Oceanobacillus iheyensis (strain DSM 14371 / CIP 107618 / JCM 11309 / KCTC 3954 / HTE831).